We begin with the raw amino-acid sequence, 153 residues long: SsrA-binding protein (153 aa).

Belongs to the SmpB family.

It localises to the cytoplasm. Its function is as follows. Required for rescue of stalled ribosomes mediated by trans-translation. Binds to transfer-messenger RNA (tmRNA), required for stable association of tmRNA with ribosomes. tmRNA and SmpB together mimic tRNA shape, replacing the anticodon stem-loop with SmpB. tmRNA is encoded by the ssrA gene; the 2 termini fold to resemble tRNA(Ala) and it encodes a 'tag peptide', a short internal open reading frame. During trans-translation Ala-aminoacylated tmRNA acts like a tRNA, entering the A-site of stalled ribosomes, displacing the stalled mRNA. The ribosome then switches to translate the ORF on the tmRNA; the nascent peptide is terminated with the 'tag peptide' encoded by the tmRNA and targeted for degradation. The ribosome is freed to recommence translation, which seems to be the essential function of trans-translation. In Desulforudis audaxviator (strain MP104C), this protein is SsrA-binding protein.